A 178-amino-acid chain; its full sequence is Probable DNA-directed RNA polymerase subunit delta (178 aa).

One can recognise an HTH HARE-type domain in the interval 14–81 (LSLIDVAHFI…GNNTWGLRAW (68 aa)). Disordered regions lie at residues 88–122 (DEEVQTQTTPKKKRKSDDDEDEDEEILDDDVDYDD) and 141–178 (LDEDEDDDDHLPDGIEGDLATVEDDYTDGDYTEDPEDK). 3 stretches are compositionally biased toward acidic residues: residues 105–122 (DDEDEDEEILDDDVDYDD), 141–150 (LDEDEDDDDH), and 161–178 (TVEDDYTDGDYTEDPEDK).

It belongs to the RpoE family. As to quaternary structure, RNAP is composed of a core of 2 alpha, a beta and a beta' subunits. The core is associated with a delta subunit and one of several sigma factors.

Functionally, participates in both the initiation and recycling phases of transcription. In the presence of the delta subunit, RNAP displays an increased specificity of transcription, a decreased affinity for nucleic acids, and an increased efficiency of RNA synthesis because of enhanced recycling. This Listeria monocytogenes serovar 1/2a (strain ATCC BAA-679 / EGD-e) protein is Probable DNA-directed RNA polymerase subunit delta.